We begin with the raw amino-acid sequence, 74 residues long: Small ribosomal subunit protein bS18 (74 aa).

This sequence belongs to the bacterial ribosomal protein bS18 family. As to quaternary structure, part of the 30S ribosomal subunit. Forms a tight heterodimer with protein bS6.

In terms of biological role, binds as a heterodimer with protein bS6 to the central domain of the 16S rRNA, where it helps stabilize the platform of the 30S subunit. The protein is Small ribosomal subunit protein bS18 of Chlorobaculum tepidum (strain ATCC 49652 / DSM 12025 / NBRC 103806 / TLS) (Chlorobium tepidum).